Reading from the N-terminus, the 119-residue chain is C-C motif chemokine 24 (119 aa).

The first 26 residues, 1-26 (MAGSATIVAGLLLLVACACCIFPIDS), serve as a signal peptide directing secretion. 2 disulfide bridges follow: Cys33/Cys58 and Cys34/Cys74. 2 N-linked (GlcNAc...) asparagine glycosylation sites follow: Asn54 and Asn115. The disordered stretch occupies residues 96 to 119 (PSKGAKAVRTKFAVQRRRGNSTEV). The segment covering 101–119 (KAVRTKFAVQRRRGNSTEV) has biased composition (basic residues).

This sequence belongs to the intercrine beta (chemokine CC) family. In terms of tissue distribution, highest expression in jejunum and spleen. Lower levels found in liver and lung. No expression detected in kidney, thymus, brain or testis.

It is found in the secreted. Chemotactic for resting T-lymphocytes, and eosinophils. Has lower chemotactic activity for neutrophils but none for monocytes and activated lymphocytes. Is a strong suppressor of colony formation by a multipotential hematopoietic progenitor cell line. Binds to CCR3. This is C-C motif chemokine 24 from Mus musculus (Mouse).